The primary structure comprises 198 residues: Holliday junction resolvase RecU (198 aa).

Mg(2+)-binding residues include threonine 83, aspartate 85, glutamate 98, and glutamine 117.

It belongs to the RecU family. The cofactor is Mg(2+).

The protein resides in the cytoplasm. The catalysed reaction is Endonucleolytic cleavage at a junction such as a reciprocal single-stranded crossover between two homologous DNA duplexes (Holliday junction).. In terms of biological role, endonuclease that resolves Holliday junction intermediates in genetic recombination. Cleaves mobile four-strand junctions by introducing symmetrical nicks in paired strands. Promotes annealing of linear ssDNA with homologous dsDNA. Required for DNA repair, homologous recombination and chromosome segregation. This chain is Holliday junction resolvase RecU, found in Streptococcus thermophilus (strain CNRZ 1066).